We begin with the raw amino-acid sequence, 260 residues long: Carbonic anhydrase 2 (260 aa).

Residues 3–259 (HGWGYADHNG…LKDRKVCASF (257 aa)) form the Alpha-carbonic anhydrase domain. The active-site Proton donor/acceptor is the His64. The Zn(2+) site is built by His94, His96, and His119. 198–199 (TT) lines the substrate pocket.

It belongs to the alpha-carbonic anhydrase family. Zn(2+) is required as a cofactor.

Its subcellular location is the cytoplasm. The catalysed reaction is hydrogencarbonate + H(+) = CO2 + H2O. Its function is as follows. Catalyzes the reversible hydration of carbon dioxide. This chain is Carbonic anhydrase 2 (ca2), found in Pseudaspius hakonensis (Big-scaled redfin).